We begin with the raw amino-acid sequence, 163 residues long: NADH-quinone oxidoreductase subunit I (163 aa).

4Fe-4S ferredoxin-type domains are found at residues 53-83 (LRRY…IEAG) and 94-123 (TRYD…EGPN). [4Fe-4S] cluster-binding residues include cysteine 63, cysteine 66, cysteine 69, cysteine 73, cysteine 103, cysteine 106, cysteine 109, and cysteine 113.

The protein belongs to the complex I 23 kDa subunit family. In terms of assembly, NDH-1 is composed of 14 different subunits. Subunits NuoA, H, J, K, L, M, N constitute the membrane sector of the complex. [4Fe-4S] cluster is required as a cofactor.

It localises to the cell inner membrane. The enzyme catalyses a quinone + NADH + 5 H(+)(in) = a quinol + NAD(+) + 4 H(+)(out). Functionally, NDH-1 shuttles electrons from NADH, via FMN and iron-sulfur (Fe-S) centers, to quinones in the respiratory chain. The immediate electron acceptor for the enzyme in this species is believed to be ubiquinone. Couples the redox reaction to proton translocation (for every two electrons transferred, four hydrogen ions are translocated across the cytoplasmic membrane), and thus conserves the redox energy in a proton gradient. The sequence is that of NADH-quinone oxidoreductase subunit I from Parvibaculum lavamentivorans (strain DS-1 / DSM 13023 / NCIMB 13966).